The following is a 176-amino-acid chain: WASH complex subunit 3 (176 aa).

The stretch at 47–74 (ETKFVEMERQLQKTEAALIILEAKLASI) forms a coiled coil. Disordered stretches follow at residues 84 to 123 (ATEA…PESV) and 152 to 176 (KMQS…GQRE). Residues 104 to 115 (TTEPPTTENPTE) show a composition bias toward low complexity.

The protein belongs to the CCDC53 family. In terms of assembly, component of the WASH complex.

It is found in the early endosome. Acts at least in part as component of the WASH complex which may regulate wash nucleation-promoting factor (NPF) activity and is required for its membrane targeting during endosomal sorting. During embryogenesis, not involved in the wash-dependent developmental migration of hemocytes anteriorly from the tail. This chain is WASH complex subunit 3, found in Drosophila melanogaster (Fruit fly).